Consider the following 171-residue polypeptide: Ribosome maturation factor RimM (171 aa).

The PRC barrel domain maps to 97-170 (EGEYYYHEII…LVTIHVMEGL (74 aa)).

Belongs to the RimM family. Binds ribosomal protein uS19.

It localises to the cytoplasm. Functionally, an accessory protein needed during the final step in the assembly of 30S ribosomal subunit, possibly for assembly of the head region. Essential for efficient processing of 16S rRNA. May be needed both before and after RbfA during the maturation of 16S rRNA. It has affinity for free ribosomal 30S subunits but not for 70S ribosomes. The protein is Ribosome maturation factor RimM of Bacillus thuringiensis (strain Al Hakam).